The sequence spans 104 residues: UPF0145 protein GTNG_1265 (104 aa).

This sequence belongs to the UPF0145 family.

This Geobacillus thermodenitrificans (strain NG80-2) protein is UPF0145 protein GTNG_1265.